Consider the following 815-residue polypeptide: Putative transcription factor phnE (815 aa).

The disordered stretch occupies residues 522–577; it reads PSRRNSDGSAHSSPSSTPSSSSTSSPLPSPASERPPPLDVVTRPSTGTSTPSSPTL. Low complexity predominate over residues 523–547; it reads SRRNSDGSAHSSPSSTPSSSSTSSP. The segment covering 548-559 has biased composition (pro residues); the sequence is LPSPASERPPPL. The segment covering 563–577 has biased composition (low complexity); sequence TRPSTGTSTPSSPTL.

Its subcellular location is the nucleus. Putative transcription factor that may be involved in the regulation of the expression of the gene cluster that mediates the biosynthesis of phenalenones such as herqueinone, compounds that have been reported to treat tumors, bacterial infections and/or mycoses, and rheumatic diseases. This Penicillium herquei protein is Putative transcription factor phnE.